A 300-amino-acid polypeptide reads, in one-letter code: Sulfate adenylyltransferase subunit 2 (300 aa).

The interval 281–300 (RAIDRDEAGSMEKKKREGYF) is disordered.

It belongs to the PAPS reductase family. CysD subfamily. In terms of assembly, heterodimer composed of CysD, the smaller subunit, and CysN.

It catalyses the reaction sulfate + ATP + H(+) = adenosine 5'-phosphosulfate + diphosphate. The protein operates within sulfur metabolism; hydrogen sulfide biosynthesis; sulfite from sulfate: step 1/3. In terms of biological role, with CysN forms the ATP sulfurylase (ATPS) that catalyzes the adenylation of sulfate producing adenosine 5'-phosphosulfate (APS) and diphosphate, the first enzymatic step in sulfur assimilation pathway. APS synthesis involves the formation of a high-energy phosphoric-sulfuric acid anhydride bond driven by GTP hydrolysis by CysN coupled to ATP hydrolysis by CysD. The sequence is that of Sulfate adenylyltransferase subunit 2 from Brucella melitensis biotype 2 (strain ATCC 23457).